The chain runs to 721 residues: Polyphosphate kinase (721 aa).

Residue Asn47 coordinates ATP. Residues Arg377 and Arg407 each contribute to the Mg(2+) site. His437 functions as the Phosphohistidine intermediate in the catalytic mechanism. ATP is bound by residues Tyr471, Arg567, and His595.

This sequence belongs to the polyphosphate kinase 1 (PPK1) family. Mg(2+) serves as cofactor. In terms of processing, an intermediate of this reaction is the autophosphorylated ppk in which a phosphate is covalently linked to a histidine residue through a N-P bond.

The catalysed reaction is [phosphate](n) + ATP = [phosphate](n+1) + ADP. Functionally, catalyzes the reversible transfer of the terminal phosphate of ATP to form a long-chain polyphosphate (polyP). This chain is Polyphosphate kinase, found in Exiguobacterium sp. (strain ATCC BAA-1283 / AT1b).